The primary structure comprises 591 residues: DEAD-box ATP-dependent RNA helicase 35 (591 aa).

The short motif at Lys146 to Val174 is the Q motif element. Positions Leu177 to Val361 constitute a Helicase ATP-binding domain. Ala190–Thr197 is an ATP binding site. The DEAD box signature appears at Asp309 to Asp312. A Helicase C-terminal domain is found at Asp372–Asn532. The CCHC-type zinc finger occupies Lys548 to Lys565.

It belongs to the DEAD box helicase family. DDX41 subfamily.

It catalyses the reaction ATP + H2O = ADP + phosphate + H(+). The sequence is that of DEAD-box ATP-dependent RNA helicase 35 (RH35) from Arabidopsis thaliana (Mouse-ear cress).